The sequence spans 331 residues: Fructose-1,6-bisphosphatase class 1 (331 aa).

Mg(2+)-binding residues include E80, D98, L100, and D101. Substrate-binding positions include 101 to 104 (DGSS) and N189. A Mg(2+)-binding site is contributed by E261.

The protein belongs to the FBPase class 1 family. As to quaternary structure, homotetramer. The cofactor is Mg(2+).

Its subcellular location is the cytoplasm. The catalysed reaction is beta-D-fructose 1,6-bisphosphate + H2O = beta-D-fructose 6-phosphate + phosphate. It functions in the pathway carbohydrate biosynthesis; gluconeogenesis. The sequence is that of Fructose-1,6-bisphosphatase class 1 from Rhodobacter capsulatus (strain ATCC BAA-309 / NBRC 16581 / SB1003).